The chain runs to 312 residues: MAMKRKKISVIGAGFTGATTAFLLAQKELGDIVLVDIPQLENPTKGKALDMLESSPVLGFDANIVGTSDYADTADSDIVVITAGIARKPGMSRDDLVTTNQKIMKQVTKEVVKYSPNCYIIVLTNPVDAMTYTVFKESGFPKNRVIGQSGVLDTARFRTFVAQELNISVKDVTGFVLGGHGDDMVPLVRYSYAGGIPLEKLIPKDRLDAIVERTRKGGGEIVNLLGNGSAYYAPAASLAEMVEAIVKDQRRILPAIAYLEGEYGYEGIYLGVPTILGGNGIEKVIELELTEDEKAALAKSVESVKNVMRVLE.

NAD(+) is bound by residues 12–17 (GAGFTG) and aspartate 36. Substrate-binding residues include arginine 87 and arginine 93. Residues asparagine 100 and 123–125 (LTN) each bind NAD(+). Asparagine 125 is a substrate binding site. Serine 149 is modified (phosphoserine). Arginine 156 provides a ligand contact to substrate. The Proton acceptor role is filled by histidine 180.

Belongs to the LDH/MDH superfamily. MDH type 3 family.

The catalysed reaction is (S)-malate + NAD(+) = oxaloacetate + NADH + H(+). In terms of biological role, catalyzes the reversible oxidation of malate to oxaloacetate. This Geobacillus thermodenitrificans (strain NG80-2) protein is Malate dehydrogenase.